The primary structure comprises 258 residues: Snake venom serine protease BPA (258 aa).

The first 18 residues, 1 to 18, serve as a signal peptide directing secretion; sequence MVLIRVIANLLILQLSNA. Positions 19–24 are excised as a propeptide; that stretch reads QKSSEL. The region spanning 25–249 is the Peptidase S1 domain; sequence VIGGDECNIT…YLPWIQSIIA (225 aa). Disulfide bonds link Cys31/Cys163, Cys50/Cys66, Cys98/Cys256, Cys142/Cys210, Cys174/Cys189, and Cys200/Cys225. N-linked (GlcNAc...) asparagine glycans are attached at residues Asn32 and Asn44. His65 acts as the Charge relay system in catalysis. Asn103 carries an N-linked (GlcNAc...) asparagine glycan. Asp110 acts as the Charge relay system in catalysis. An N-linked (GlcNAc...) asparagine glycan is attached at Asn121. Ser133 is a glycosylation site (O-linked (GalNAc...) serine). Asn154 and Asn170 each carry an N-linked (GlcNAc...) asparagine glycan. The active-site Charge relay system is Ser204. Residues Asn211 and Asn251 are each glycosylated (N-linked (GlcNAc...) asparagine). An O-linked (GalNAc...) threonine glycan is attached at Thr255.

The protein belongs to the peptidase S1 family. Snake venom subfamily. Monomer. Post-translationally, N- and O-glycosylated. The glycosylation has a stabilizing effect on the protein. However, the removal of part of the carbohydrates enhances the proteolytic activity of the SVSP towards human and rat fibrinogen. Expressed by the venom gland.

The protein localises to the secreted. Its activity is regulated as follows. Inhibited by diisopropylfluorophosphate (DFP), but not by SBTI, Antithrombin III/heparin and BPTI, probably due to steric hindrance caused by its huge carbohydrate moietie. Its function is as follows. Snake venom serine protease that has a potent and selective fibrinogenolytic activity. Preferentially cleaves the alpha-chain (FGA) of human and rat fibrinogen at Arg-|-Gly bonds, and slowly digests the beta-chain (FGB). In vivo, completely avoids thrombus formation induced in rat, decreases the fibrinogen plasma level and prolonges the recalcification time. Possesses esterolytic and amidolytic activities. This is Snake venom serine protease BPA from Bothrops jararaca (Jararaca).